The sequence spans 122 residues: Probable transcription factor PqrA (122 aa).

The HTH araC/xylS-type domain occupies 7–107; the sequence is NDILKWLETQ…NTTPAKFREN (101 aa). 2 consecutive DNA-binding regions (H-T-H motif) follow at residues 26 to 47 and 74 to 97; these read DTIA…KDFK and ILDI…KKHF.

Functionally, upon expression in E.coli strain KY2563 confers resistance to antibiotics ofloxacin, ciprofloxacin, tetracycline, chloramphenicol, and ceftazidime (increases minimal inhibitory concentration by 8-32 times); also decreases expression of OmpF. The chain is Probable transcription factor PqrA from Proteus vulgaris.